A 1043-amino-acid polypeptide reads, in one-letter code: Integrator complex subunit 3 (1043 aa).

Methionine 1 carries the post-translational modification N-acetylmethionine. Serine 502, serine 537, and serine 995 each carry phosphoserine. The tract at residues 977-1043 (YEDSSTKPPK…GSSAVGSDSD (67 aa)) is disordered. A compositionally biased stretch (acidic residues) spans 1008–1022 (AEEESGSSSASEEED).

Belongs to the Integrator subunit 3 family. In terms of assembly, component of the Integrator complex, composed of core subunits INTS1, INTS2, INTS3, INTS4, INTS5, INTS6, INTS7, INTS8, INTS9/RC74, INTS10, INTS11/CPSF3L, INTS12, INTS13, INTS14 and INTS15. The core complex associates with protein phosphatase 2A subunits PPP2CA and PPP2R1A, to form the Integrator-PP2A (INTAC) complex. Component of the SOSS complex, composed of SOSS-B (SOSS-B1/NABP2 or SOSS-B2/NABP1), SOSS-A/INTS3 and SOSS-C/INIP. SOSS complexes containing SOSS-B1/NABP2 are more abundant than complexes containing SOSS-B2/NABP1. Interacts with SOSS-B1/NABP2, SOSS-B2/NABP1 and SOSS-C/INIP; the interaction is direct. Interacts with NBN/NBS1.

Its subcellular location is the nucleus. It localises to the cytoplasm. Its function is as follows. Component of the integrator complex, a multiprotein complex that terminates RNA polymerase II (Pol II) transcription in the promoter-proximal region of genes. The integrator complex provides a quality checkpoint during transcription elongation by driving premature transcription termination of transcripts that are unfavorably configured for transcriptional elongation: the complex terminates transcription by (1) catalyzing dephosphorylation of the C-terminal domain (CTD) of Pol II subunit POLR2A/RPB1 and SUPT5H/SPT5, (2) degrading the exiting nascent RNA transcript via endonuclease activity and (3) promoting the release of Pol II from bound DNA. The integrator complex is also involved in terminating the synthesis of non-coding Pol II transcripts, such as enhancer RNAs (eRNAs), small nuclear RNAs (snRNAs), telomerase RNAs and long non-coding RNAs (lncRNAs). Within the integrator complex, INTS3 is involved in the post-termination step: INTS3 binds INTS7 in the open conformation of integrator complex and prevents the rebinding of Pol II to the integrator after termination cycle. Mediates recruitment of cytoplasmic dynein to the nuclear envelope, probably as component of the integrator complex. Functionally, component of the SOSS complex, a multiprotein complex that functions downstream of the MRN complex to promote DNA repair and G2/M checkpoint. The SOSS complex associates with single-stranded DNA at DNA lesions and influences diverse endpoints in the cellular DNA damage response including cell-cycle checkpoint activation, recombinational repair and maintenance of genomic stability. The SOSS complex is required for efficient homologous recombination-dependent repair of double-strand breaks (DSBs) and ATM-dependent signaling pathways. In the SOSS complex, it is required for the assembly of the complex and for stabilization of the complex at DNA damage sites. This Homo sapiens (Human) protein is Integrator complex subunit 3.